A 201-amino-acid polypeptide reads, in one-letter code: Large ribosomal subunit protein uL4 (201 aa).

Positions 44–66 (KAQKTRAEVRGGGKKPWRQKGTG) are disordered. Basic residues predominate over residues 55-66 (GGKKPWRQKGTG).

This sequence belongs to the universal ribosomal protein uL4 family. Part of the 50S ribosomal subunit.

In terms of biological role, one of the primary rRNA binding proteins, this protein initially binds near the 5'-end of the 23S rRNA. It is important during the early stages of 50S assembly. It makes multiple contacts with different domains of the 23S rRNA in the assembled 50S subunit and ribosome. Functionally, forms part of the polypeptide exit tunnel. The chain is Large ribosomal subunit protein uL4 from Alteromonas mediterranea (strain DSM 17117 / CIP 110805 / LMG 28347 / Deep ecotype).